We begin with the raw amino-acid sequence, 460 residues long: ATP synthase subunit beta (460 aa).

150–157 (GGAGVGKT) lines the ATP pocket.

It belongs to the ATPase alpha/beta chains family. As to quaternary structure, F-type ATPases have 2 components, CF(1) - the catalytic core - and CF(0) - the membrane proton channel. CF(1) has five subunits: alpha(3), beta(3), gamma(1), delta(1), epsilon(1). CF(0) has three main subunits: a(1), b(2) and c(9-12). The alpha and beta chains form an alternating ring which encloses part of the gamma chain. CF(1) is attached to CF(0) by a central stalk formed by the gamma and epsilon chains, while a peripheral stalk is formed by the delta and b chains.

The protein resides in the cell inner membrane. The catalysed reaction is ATP + H2O + 4 H(+)(in) = ADP + phosphate + 5 H(+)(out). Produces ATP from ADP in the presence of a proton gradient across the membrane. The catalytic sites are hosted primarily by the beta subunits. In Citrobacter koseri (strain ATCC BAA-895 / CDC 4225-83 / SGSC4696), this protein is ATP synthase subunit beta.